The primary structure comprises 489 residues: Glutamate--tRNA ligase (489 aa).

The 'HIGH' region signature appears at 11–21; it reads PSPTGHLHIGG. Zn(2+) contacts are provided by Cys-108, Cys-110, Cys-136, and His-138. Residues 253 to 257 carry the 'KMSKS' region motif; that stretch reads KLSKR. Lys-256 contributes to the ATP binding site.

Belongs to the class-I aminoacyl-tRNA synthetase family. Glutamate--tRNA ligase type 1 subfamily. Monomer. It depends on Zn(2+) as a cofactor.

It localises to the cytoplasm. The enzyme catalyses tRNA(Glu) + L-glutamate + ATP = L-glutamyl-tRNA(Glu) + AMP + diphosphate. Its function is as follows. Catalyzes the attachment of glutamate to tRNA(Glu) in a two-step reaction: glutamate is first activated by ATP to form Glu-AMP and then transferred to the acceptor end of tRNA(Glu). The polypeptide is Glutamate--tRNA ligase (Geobacillus thermodenitrificans (strain NG80-2)).